Consider the following 83-residue polypeptide: Cell division topological specificity factor (83 aa).

This sequence belongs to the MinE family.

Its function is as follows. Prevents the cell division inhibition by proteins MinC and MinD at internal division sites while permitting inhibition at polar sites. This ensures cell division at the proper site by restricting the formation of a division septum at the midpoint of the long axis of the cell. The polypeptide is Cell division topological specificity factor (Buchnera aphidicola subsp. Baizongia pistaciae (strain Bp)).